A 591-amino-acid polypeptide reads, in one-letter code: Aspartate--tRNA ligase (591 aa).

Residue Glu-173 participates in L-aspartate binding. The interval 197–200 is aspartate; the sequence is QLFK. Arg-219 is a binding site for L-aspartate. ATP-binding positions include 219-221 and Gln-228; that span reads RDE. An L-aspartate-binding site is contributed by His-448. Glu-482 contributes to the ATP binding site. Arg-489 serves as a coordination point for L-aspartate. Residue 534–537 participates in ATP binding; sequence GLDR.

Belongs to the class-II aminoacyl-tRNA synthetase family. Type 1 subfamily. As to quaternary structure, homodimer.

It localises to the cytoplasm. It carries out the reaction tRNA(Asp) + L-aspartate + ATP = L-aspartyl-tRNA(Asp) + AMP + diphosphate. Catalyzes the attachment of L-aspartate to tRNA(Asp) in a two-step reaction: L-aspartate is first activated by ATP to form Asp-AMP and then transferred to the acceptor end of tRNA(Asp). The polypeptide is Aspartate--tRNA ligase (Shewanella sp. (strain ANA-3)).